An 806-amino-acid chain; its full sequence is Xylosyltransferase sqv-6 (806 aa).

At 1 to 11 (MLFNGTTKYRD) the chain is on the cytoplasmic side. Residues 12–32 (YAIVISLFFLLNVYLLYNTAQ) form a helical; Signal-anchor for type II membrane protein membrane-spanning segment. Over 33 to 806 (HTQVGNSKHI…GYDEDTQTLI (774 aa)) the chain is Lumenal. Cys57 and Cys85 are oxidised to a cystine. N-linked (GlcNAc...) asparagine glycosylation is found at Asn89 and Asn169. Disulfide bonds link Cys101–Cys445, Cys464–Cys478, and Cys466–Cys476. One can recognise a WSC domain in the interval 109 to 205 (IDQRIGCFLD…FNAVEIFRTG (97 aa)). Residues Asp264 and 293 to 295 (TIW) contribute to the UDP-alpha-D-xylose site. Asn325 is a glycosylation site (N-linked (GlcNAc...) asparagine). 398 to 399 (DW) provides a ligand contact to UDP-alpha-D-xylose. UDP-alpha-D-xylose contacts are provided by residues Ser479 and 505–506 (RK). Residues Asn614, Asn655, and Asn719 are each glycosylated (N-linked (GlcNAc...) asparagine). Residues Cys772 and Cys778 are joined by a disulfide bond.

This sequence belongs to the glycosyltransferase 14 family. XylT subfamily. Requires a divalent metal cation as cofactor.

The protein localises to the endoplasmic reticulum membrane. It is found in the golgi apparatus membrane. The enzyme catalyses UDP-alpha-D-xylose + L-seryl-[protein] = 3-O-(beta-D-xylosyl)-L-seryl-[protein] + UDP + H(+). It functions in the pathway glycan metabolism; chondroitin sulfate biosynthesis. It participates in glycan metabolism; heparan sulfate biosynthesis. Its function is as follows. Catalyzes the first step in biosynthesis of glycosaminoglycan. Transfers D-xylose from UDP-D-xylose to specific serine residues of the core protein. Required for vulval morphogenesis and zygotic cytokinesis, suggesting that glycosaminoglycans play a central role in vulval morphogenesis. The sequence is that of Xylosyltransferase sqv-6 from Caenorhabditis elegans.